A 106-amino-acid chain; its full sequence is uncharacterized protein (106 aa).

The protein localises to the mitochondrion. This is an uncharacterized protein from Claviceps purpurea (Ergot fungus).